Reading from the N-terminus, the 92-residue chain is Small ribosomal subunit protein bS20 (92 aa).

The segment at 1-25 is disordered; it reads MANSAQARKRARQAAKANSHNSALR.

It belongs to the bacterial ribosomal protein bS20 family.

In terms of biological role, binds directly to 16S ribosomal RNA. In Paraburkholderia phytofirmans (strain DSM 17436 / LMG 22146 / PsJN) (Burkholderia phytofirmans), this protein is Small ribosomal subunit protein bS20.